We begin with the raw amino-acid sequence, 299 residues long: tRNA dimethylallyltransferase (299 aa).

13–20 (GPTASGKT) lines the ATP pocket. 15–20 (TASGKT) provides a ligand contact to substrate. Residues 38–41 (DSRQ) form an interaction with substrate tRNA region.

The protein belongs to the IPP transferase family. In terms of assembly, monomer. Mg(2+) serves as cofactor.

The enzyme catalyses adenosine(37) in tRNA + dimethylallyl diphosphate = N(6)-dimethylallyladenosine(37) in tRNA + diphosphate. Its function is as follows. Catalyzes the transfer of a dimethylallyl group onto the adenine at position 37 in tRNAs that read codons beginning with uridine, leading to the formation of N6-(dimethylallyl)adenosine (i(6)A). This chain is tRNA dimethylallyltransferase, found in Prochlorococcus marinus (strain NATL2A).